A 64-amino-acid polypeptide reads, in one-letter code: Small cysteine-rich protein (64 aa).

The signal sequence occupies residues 1 to 17 (FVCVQARQIDPEQILRT). The propeptide occupies 18-19 (PE).

In terms of processing, contains 4 disulfide bonds.

The protein localises to the secreted. It localises to the nematocyst. This Anemonia viridis (Snakelocks anemone) protein is Small cysteine-rich protein.